The following is a 132-amino-acid chain: Small ribosomal subunit protein uS13 (132 aa).

The segment at 106 to 132 (PVRGQVTQKNARTRKGPRKTVAGKKGK) is disordered. Residues 116–132 (ARTRKGPRKTVAGKKGK) show a composition bias toward basic residues.

It belongs to the universal ribosomal protein uS13 family. As to quaternary structure, part of the 30S ribosomal subunit. Forms a loose heterodimer with protein S19. Forms two bridges to the 50S subunit in the 70S ribosome.

Located at the top of the head of the 30S subunit, it contacts several helices of the 16S rRNA. In the 70S ribosome it contacts the 23S rRNA (bridge B1a) and protein L5 of the 50S subunit (bridge B1b), connecting the 2 subunits; these bridges are implicated in subunit movement. Contacts the tRNAs in the A and P-sites. This chain is Small ribosomal subunit protein uS13, found in Mycoplasmopsis pulmonis (strain UAB CTIP) (Mycoplasma pulmonis).